We begin with the raw amino-acid sequence, 351 residues long: Porphobilinogen deaminase (351 aa).

Cys-242 is subject to S-(dipyrrolylmethanemethyl)cysteine.

Belongs to the HMBS family. In terms of assembly, monomer. Requires dipyrromethane as cofactor.

The catalysed reaction is 4 porphobilinogen + H2O = hydroxymethylbilane + 4 NH4(+). It participates in porphyrin-containing compound metabolism; protoporphyrin-IX biosynthesis; coproporphyrinogen-III from 5-aminolevulinate: step 2/4. Its function is as follows. Tetrapolymerization of the monopyrrole PBG into the hydroxymethylbilane pre-uroporphyrinogen in several discrete steps. This chain is Porphobilinogen deaminase, found in Rickettsia rickettsii (strain Sheila Smith).